Reading from the N-terminus, the 221-residue chain is 7-cyano-7-deazaguanine synthase (221 aa).

Leu7–Leu17 lines the ATP pocket. Cys183, Cys191, Cys194, and Cys197 together coordinate Zn(2+).

Belongs to the QueC family. Homodimer. It depends on Zn(2+) as a cofactor.

The enzyme catalyses 7-carboxy-7-deazaguanine + NH4(+) + ATP = 7-cyano-7-deazaguanine + ADP + phosphate + H2O + H(+). It participates in purine metabolism; 7-cyano-7-deazaguanine biosynthesis. Functionally, catalyzes the ATP-dependent conversion of 7-carboxy-7-deazaguanine (CDG) to 7-cyano-7-deazaguanine (preQ(0)). The polypeptide is 7-cyano-7-deazaguanine synthase (Caldicellulosiruptor bescii (strain ATCC BAA-1888 / DSM 6725 / KCTC 15123 / Z-1320) (Anaerocellum thermophilum)).